Consider the following 587-residue polypeptide: MSDSDMDIDDDEVEQKVQVHTIVRESELFDKPPIQASNSHNDVKRHSVTTPLDEQSKIIKEQAFAQDNGTLPRFPAPGIPPRSFFTGGGGNEPEQKRAALPCKFFAKGWCFNGVSCKFLHVKENSNCTSQQLAENSMAGNGGIRSDLERRILDSREGVRVSQLSENGVTSLPTREDISFMNPQRVFSSMSFVNPPGSQRVFPFNNEMRFMPSFENIRRESLKQTYGADFTDNRSLVINNANSFALRSSFVHEHRPSISSYLKTDMGSAGPAWTGSLSSSVPMNDRASTVGDFENGNSLSGSGSLPTLQGVAVSSDKGAEANTTSTKKKVSSDDWEPSEPFKASFTIPPYILPSSDALYDPFTDIENLGDRPLNDSLSSKGEHARKSSCQQKDGDSASGPQARDCKNDDKSSSCSQNQHQETVARSLEAHGVVEGVATSVVDQNDTATPSKEISSATAAENRVVLKRIKPAGHDSWHRSDGSSYKKTKKSDEIDGEVRSDAGMKVMRLFRTAVVETIKEMLKPLWREGRLTKDVHNMIVKKAAEKVVGAAVQFHQVPTDTESVDQYLGLSGTRIVKLVEGYVEKYGKP.

The C3H1-type zinc finger occupies 96 to 123 (KRAALPCKFFAKGWCFNGVSCKFLHVKE). Disordered stretches follow at residues 264-346 (DMGS…SFTI), 368-421 (GDRP…HQET), and 467-492 (IKPAGHDSWHRSDGSSYKKTKKSDEI). Positions 294–304 (NGNSLSGSGSL) are enriched in low complexity. Residues 470–479 (AGHDSWHRSD) are compositionally biased toward basic and acidic residues.

In terms of assembly, component of the transcription activator complex FRI-C composed of FRI, FRL1, SUF4, FLX and FES1. Interacts with FLX, (via C-terminus) with FRI (via C-terminus), and with RIN1, a component of the SWR1 chromatin-remodeling complex. In terms of tissue distribution, expressed in root and shoot apices and vasculature.

The protein localises to the nucleus. In terms of biological role, transcriptional activator involved in the FRIGIDA-mediated vernalization pathway, but not in the autonomous flowering pathway. Acts cooperatively with FRI (FRIGIDA) or FRL1 (FRIGIDA-LIKE 1) to promote FLC (FLOWERING LOCUS C) expression. Required for the stabilization of the FRI-C complex. This Arabidopsis thaliana (Mouse-ear cress) protein is Protein FRIGIDA-ESSENTIAL 1 (FES1).